A 621-amino-acid chain; its full sequence is Putative DNA 3'-5' helicase Rad25 (621 aa).

The region spanning 268-417 (VERFTEQGSG…EIFTLIGPPI (150 aa)) is the Helicase ATP-binding domain. 281-288 (GPPGSGKT) is a binding site for ATP. Residues 371–374 (DEVH) carry the DEAH box motif. The disordered stretch occupies residues 441 to 465 (PWGDETEQSEYSSTSGHDRRQAAAS). Positions 469-621 (KIDEIRYALA…EAVEPPAKTE (153 aa)) constitute a Helicase C-terminal domain.

The protein belongs to the helicase family. RAD25/XPB subfamily.

It catalyses the reaction Couples ATP hydrolysis with the unwinding of duplex DNA by translocating in the 3'-5' direction.. The catalysed reaction is ATP + H2O = ADP + phosphate + H(+). The chain is Putative DNA 3'-5' helicase Rad25 from Haloarcula marismortui (strain ATCC 43049 / DSM 3752 / JCM 8966 / VKM B-1809) (Halobacterium marismortui).